The chain runs to 194 residues: Leucyl/phenylalanyl-tRNA--protein transferase (194 aa).

Belongs to the L/F-transferase family.

The protein resides in the cytoplasm. The catalysed reaction is N-terminal L-lysyl-[protein] + L-leucyl-tRNA(Leu) = N-terminal L-leucyl-L-lysyl-[protein] + tRNA(Leu) + H(+). It carries out the reaction N-terminal L-arginyl-[protein] + L-leucyl-tRNA(Leu) = N-terminal L-leucyl-L-arginyl-[protein] + tRNA(Leu) + H(+). The enzyme catalyses L-phenylalanyl-tRNA(Phe) + an N-terminal L-alpha-aminoacyl-[protein] = an N-terminal L-phenylalanyl-L-alpha-aminoacyl-[protein] + tRNA(Phe). Functions in the N-end rule pathway of protein degradation where it conjugates Leu, Phe and, less efficiently, Met from aminoacyl-tRNAs to the N-termini of proteins containing an N-terminal arginine or lysine. The protein is Leucyl/phenylalanyl-tRNA--protein transferase of Chlorobium phaeobacteroides (strain DSM 266 / SMG 266 / 2430).